The chain runs to 155 residues: Cytochrome c-type biogenesis protein CcmE (155 aa).

Residues 1–8 (MNPLRKKR) are Cytoplasmic-facing. A helical; Signal-anchor for type II membrane protein transmembrane segment spans residues 9-29 (LLIIVALLAGVGLAVTLALSA). Residues 30 to 155 (LQENINLFYT…AASPTPVKQG (126 aa)) lie on the Periplasmic side of the membrane. Heme-binding residues include His124 and Tyr128.

This sequence belongs to the CcmE/CycJ family.

The protein localises to the cell inner membrane. In terms of biological role, heme chaperone required for the biogenesis of c-type cytochromes. Transiently binds heme delivered by CcmC and transfers the heme to apo-cytochromes in a process facilitated by CcmF and CcmH. The chain is Cytochrome c-type biogenesis protein CcmE from Pseudomonas syringae pv. syringae (strain B728a).